The following is a 287-amino-acid chain: Pyridoxal 5'-phosphate synthase subunit PdxS (287 aa).

Asp-21 contributes to the D-ribose 5-phosphate binding site. Lys-78 serves as the catalytic Schiff-base intermediate with D-ribose 5-phosphate. Gly-150 serves as a coordination point for D-ribose 5-phosphate. Arg-162 provides a ligand contact to D-glyceraldehyde 3-phosphate. Residues Gly-211 and 232–233 contribute to the D-ribose 5-phosphate site; that span reads GS.

The protein belongs to the PdxS/SNZ family. In terms of assembly, in the presence of PdxT, forms a dodecamer of heterodimers.

The catalysed reaction is aldehydo-D-ribose 5-phosphate + D-glyceraldehyde 3-phosphate + L-glutamine = pyridoxal 5'-phosphate + L-glutamate + phosphate + 3 H2O + H(+). It functions in the pathway cofactor biosynthesis; pyridoxal 5'-phosphate biosynthesis. Functionally, catalyzes the formation of pyridoxal 5'-phosphate from ribose 5-phosphate (RBP), glyceraldehyde 3-phosphate (G3P) and ammonia. The ammonia is provided by the PdxT subunit. Can also use ribulose 5-phosphate and dihydroxyacetone phosphate as substrates, resulting from enzyme-catalyzed isomerization of RBP and G3P, respectively. This is Pyridoxal 5'-phosphate synthase subunit PdxS from Tropheryma whipplei (strain TW08/27) (Whipple's bacillus).